The sequence spans 231 residues: Large ribosomal subunit protein uL1 (231 aa).

Belongs to the universal ribosomal protein uL1 family. Part of the 50S ribosomal subunit.

Its function is as follows. Binds directly to 23S rRNA. The L1 stalk is quite mobile in the ribosome, and is involved in E site tRNA release. In terms of biological role, protein L1 is also a translational repressor protein, it controls the translation of the L11 operon by binding to its mRNA. The sequence is that of Large ribosomal subunit protein uL1 from Thioalkalivibrio sulfidiphilus (strain HL-EbGR7).